We begin with the raw amino-acid sequence, 331 residues long: Transmembrane protein 59-like (331 aa).

An N-terminal signal peptide occupies residues 1-21 (MAAVALPLLLLLASPATPTPA). The segment at 15–62 (PATPTPARDPFSPQLGDTQRCQQRCRQRHPGLPPAQPEPEGPSESPNN) is disordered. Positions 45-54 (GLPPAQPEPE) are enriched in pro residues. N-linked (GlcNAc...) asparagine glycosylation is present at Asn90. A helical membrane pass occupies residues 258–278 (VLFCCLFLSVLIILWLSCCTL). A Microbody targeting signal motif is present at residues 329–331 (TTL).

It belongs to the TMEM59 family.

The protein resides in the golgi apparatus membrane. Modulates the O-glycosylation and complex N-glycosylation steps occurring during the Golgi maturation of APP. Inhibits APP transport to the cell surface and further shedding. This chain is Transmembrane protein 59-like (Tmem59l), found in Rattus norvegicus (Rat).